Here is a 799-residue protein sequence, read N- to C-terminus: Cadherin-8 (799 aa).

Positions 1-29 are cleaved as a signal peptide; the sequence is MPERLAETLMDLWTPLIILWITLPSCVYT. A propeptide spanning residues 30–61 is cleaved from the precursor; the sequence is APMNQAHVLTTGSPLELSRQSEDMRILSRSKR. 5 Cadherin domains span residues 62 to 167, 168 to 276, 277 to 391, 392 to 494, and 495 to 616; these read GWVW…APEF, LNGP…PPKF, AQSL…PPVF, SSPT…DNAP, and EFAS…YVLP. Residues 62–621 are Extracellular-facing; the sequence is GWVWNQMFVL…AYVLPIGLSM (560 aa). An N-linked (GlcNAc...) asparagine glycan is attached at asparagine 188. N-linked (GlcNAc...) asparagine glycans are attached at residues asparagine 463, asparagine 473, and asparagine 544. Residues 622–642 form a helical membrane-spanning segment; it reads GALIAILACIILLLVIVVLFV. At 643-799 the chain is on the cytoplasmic side; sequence TLRRHKNEPL…YSVGESDKET (157 aa). At serine 795 the chain carries Phosphoserine.

The protein localises to the cell membrane. Functionally, cadherins are calcium-dependent cell adhesion proteins. They preferentially interact with themselves in a homophilic manner in connecting cells; cadherins may thus contribute to the sorting of heterogeneous cell types. The protein is Cadherin-8 (Cdh8) of Mus musculus (Mouse).